A 194-amino-acid chain; its full sequence is Lysozyme g (194 aa).

Residues glutamate 71 and aspartate 84 contribute to the active site.

The protein belongs to the glycosyl hydrolase 23 family. Expressed in intestine, liver, spleen, anterior kidney, posterior kidney, heart, gill, muscle and leukocytes.

The catalysed reaction is Hydrolysis of (1-&gt;4)-beta-linkages between N-acetylmuramic acid and N-acetyl-D-glucosamine residues in a peptidoglycan and between N-acetyl-D-glucosamine residues in chitodextrins.. In terms of biological role, has lytic activity against M.lysodeikticus, V.alginolyticus from Epinephelus fario, V.vulnificus from culture water, A.hydrophila from soft-shell turtle, A.hydrophila from goldfish and V.parahaemolyticus, P.fluorescens and V.fluvialis from culture water. The protein is Lysozyme g of Epinephelus coioides (Orange-spotted grouper).